The following is a 365-amino-acid chain: 3-dehydroquinate synthase (365 aa).

Residues 106-110 (GVIGD), 130-131 (TT), lysine 142, lysine 151, and 169-172 (FFAT) contribute to the NAD(+) site. 3 residues coordinate Zn(2+): glutamate 184, histidine 247, and histidine 264.

The protein belongs to the sugar phosphate cyclases superfamily. Dehydroquinate synthase family. NAD(+) is required as a cofactor. Co(2+) serves as cofactor. The cofactor is Zn(2+).

The protein localises to the cytoplasm. The catalysed reaction is 7-phospho-2-dehydro-3-deoxy-D-arabino-heptonate = 3-dehydroquinate + phosphate. It functions in the pathway metabolic intermediate biosynthesis; chorismate biosynthesis; chorismate from D-erythrose 4-phosphate and phosphoenolpyruvate: step 2/7. In terms of biological role, catalyzes the conversion of 3-deoxy-D-arabino-heptulosonate 7-phosphate (DAHP) to dehydroquinate (DHQ). The chain is 3-dehydroquinate synthase from Listeria innocua serovar 6a (strain ATCC BAA-680 / CLIP 11262).